The sequence spans 468 residues: 6-phospho-beta-galactosidase (468 aa).

D-galactose 6-phosphate-binding residues include glutamine 19, histidine 116, asparagine 159, glutamate 160, and asparagine 297. Glutamate 160 (proton donor) is an active-site residue. Residue glutamate 375 is the Nucleophile of the active site. The D-galactose 6-phosphate site is built by serine 428, tryptophan 429, lysine 435, and tyrosine 437.

Belongs to the glycosyl hydrolase 1 family.

The catalysed reaction is a 6-phospho-beta-D-galactoside + H2O = D-galactose 6-phosphate + an alcohol. The protein operates within carbohydrate metabolism; lactose degradation; D-galactose 6-phosphate and beta-D-glucose from lactose 6-phosphate: step 1/1. The polypeptide is 6-phospho-beta-galactosidase (Streptococcus uberis (strain ATCC BAA-854 / 0140J)).